A 420-amino-acid chain; its full sequence is 2,3-dimethylmalate dehydratase large subunit (420 aa).

Positions 301, 361, and 364 each coordinate [4Fe-4S] cluster.

Belongs to the aconitase/IPM isomerase family. LeuC type 2 subfamily. Heterodimer of a large and a small subunit. [4Fe-4S] cluster serves as cofactor.

It carries out the reaction (2R,3S)-2,3-dimethylmalate = dimethylmaleate + H2O. It functions in the pathway cofactor degradation; nicotinate degradation; propanoate and pyruvate from 6-hydroxynicotinate: step 7/8. This is 2,3-dimethylmalate dehydratase large subunit (dmdA) from Eubacterium barkeri (Clostridium barkeri).